A 336-amino-acid chain; its full sequence is Fructose-1,6-bisphosphatase class 1 (336 aa).

Mg(2+) contacts are provided by Glu90, Asp112, Leu114, and Asp115. Residues 115 to 118 (DGSS), Asn211, and Lys277 each bind substrate. Residue Glu283 participates in Mg(2+) binding.

The protein belongs to the FBPase class 1 family. In terms of assembly, homotetramer. Mg(2+) is required as a cofactor.

The protein localises to the cytoplasm. It catalyses the reaction beta-D-fructose 1,6-bisphosphate + H2O = beta-D-fructose 6-phosphate + phosphate. The protein operates within carbohydrate biosynthesis; gluconeogenesis. The chain is Fructose-1,6-bisphosphatase class 1 from Pseudomonas paraeruginosa (strain DSM 24068 / PA7) (Pseudomonas aeruginosa (strain PA7)).